A 387-amino-acid chain; its full sequence is 2-alkyl-3-oxoalkanoate reductase (387 aa).

Residue Y190 is the Proton acceptor of the active site. K194 is a binding site for NADP(+).

This sequence belongs to the 3-beta-HSD family.

The catalysed reaction is a (2R,3S)-2-alkyl-3-hydroxyalkanoate + NADP(+) = an (R)-2-alkyl-3-oxoalkanoate + NADPH + H(+). In terms of biological role, involved in olefin biosynthesis. Catalyzes the reversible stereospecific NADPH-dependent reduction of 2-alkyl-3-oxoalkanoic acids to 2-alkyl-3-hydroxyalkanoic acids. The S.oneidensis oleABCD genes produce 3,6,9,12,15,19,22,25,28-hentriacontanonaene, which may aid the cells in adapting to a sudden drop in temperature. The sequence is that of 2-alkyl-3-oxoalkanoate reductase from Shewanella oneidensis (strain ATCC 700550 / JCM 31522 / CIP 106686 / LMG 19005 / NCIMB 14063 / MR-1).